An 889-amino-acid chain; its full sequence is Translation initiation factor IF-2 (889 aa).

The segment covering 115-236 (EAEAQAKAEA…EAERYSDHHI (122 aa)) has biased composition (basic and acidic residues). The segment at 115–293 (EAEAQAKAEA…RNRSTAPESM (179 aa)) is disordered. Basic residues predominate over residues 257–270 (GRRARNKNTAKTKR). The span at 271-280 (GGKDARDGRE) shows a compositional bias: basic and acidic residues. The region spanning 389–558 (PRAPVVTIMG…LLQAEVLELK (170 aa)) is the tr-type G domain. The segment at 398 to 405 (GHVDHGKT) is G1. 398 to 405 (GHVDHGKT) is a GTP binding site. Residues 423–427 (GITQH) form a G2 region. Residues 444–447 (DTPG) are G3. GTP-binding positions include 444–448 (DTPGH) and 498–501 (NKMD). The tract at residues 498–501 (NKMD) is G4. The G5 stretch occupies residues 534–536 (SAK).

This sequence belongs to the TRAFAC class translation factor GTPase superfamily. Classic translation factor GTPase family. IF-2 subfamily.

Its subcellular location is the cytoplasm. Functionally, one of the essential components for the initiation of protein synthesis. Protects formylmethionyl-tRNA from spontaneous hydrolysis and promotes its binding to the 30S ribosomal subunits. Also involved in the hydrolysis of GTP during the formation of the 70S ribosomal complex. This Shewanella sp. (strain ANA-3) protein is Translation initiation factor IF-2.